Here is a 1030-residue protein sequence, read N- to C-terminus: Exportin-T (1030 aa).

The protein belongs to the exportin family.

It localises to the nucleus. The protein resides in the cytoplasm. In terms of biological role, tRNA nucleus export receptor which facilitates tRNA translocation across the nuclear pore complex. Involved in pre-tRNA splicing, probably by affecting the interaction of pre-tRNA with splicing endonuclease. The sequence is that of Exportin-T (los1) from Aspergillus niger (strain ATCC MYA-4892 / CBS 513.88 / FGSC A1513).